A 547-amino-acid chain; its full sequence is Serine/threonine-protein kinase pkn3 (547 aa).

The Protein kinase domain maps to Tyr-18–Val-288. ATP contacts are provided by residues Ile-24–Val-32 and Lys-47. Asp-142 serves as the catalytic Proton acceptor. The span at Lys-290–Pro-299 shows a compositional bias: basic and acidic residues. The disordered stretch occupies residues Lys-290–Ala-327.

The protein belongs to the protein kinase superfamily. Ser/Thr protein kinase family.

The enzyme catalyses L-seryl-[protein] + ATP = O-phospho-L-seryl-[protein] + ADP + H(+). It catalyses the reaction L-threonyl-[protein] + ATP = O-phospho-L-threonyl-[protein] + ADP + H(+). The chain is Serine/threonine-protein kinase pkn3 (pkn3) from Myxococcus xanthus.